A 382-amino-acid polypeptide reads, in one-letter code: Na(+)/H(+) antiporter NhaA 2 (382 aa).

11 consecutive transmembrane segments (helical) span residues 7–27 (MALS…LALL), 58–78 (LDLW…GLEL), 94–114 (SLPI…FAAI), 124–144 (GWAI…MLLG), 153–173 (LFLL…IALF), 178–198 (LSAL…LLNY), 199–219 (YHIT…IAML), 255–275 (NPWV…GIDI), 291–311 (IILG…FIAI), 327–347 (FYGI…IDGL), and 361–381 (LAIL…LKIV).

This sequence belongs to the NhaA Na(+)/H(+) (TC 2.A.33) antiporter family.

Its subcellular location is the cell inner membrane. It catalyses the reaction Na(+)(in) + 2 H(+)(out) = Na(+)(out) + 2 H(+)(in). Functionally, na(+)/H(+) antiporter that extrudes sodium in exchange for external protons. The sequence is that of Na(+)/H(+) antiporter NhaA 2 from Campylobacter jejuni subsp. doylei (strain ATCC BAA-1458 / RM4099 / 269.97).